Consider the following 241-residue polypeptide: Carboxy-S-adenosyl-L-methionine synthase (241 aa).

Residues tyrosine 38, 63–65 (GCS), 88–89 (DN), 116–117 (DI), asparagine 131, and arginine 198 contribute to the S-adenosyl-L-methionine site.

Belongs to the class I-like SAM-binding methyltransferase superfamily. Cx-SAM synthase family. Homodimer.

The catalysed reaction is prephenate + S-adenosyl-L-methionine = carboxy-S-adenosyl-L-methionine + 3-phenylpyruvate + H2O. Functionally, catalyzes the conversion of S-adenosyl-L-methionine (SAM) to carboxy-S-adenosyl-L-methionine (Cx-SAM). This is Carboxy-S-adenosyl-L-methionine synthase from Actinobacillus pleuropneumoniae serotype 7 (strain AP76).